The chain runs to 268 residues: MIQDSMMTETDPQVAKSPEVALAVRNLNFYYGENHALHDISIDFPARRVTAMIGPSGCGKSTLLRVFNRMYDLYPGQRATGEVIFDGRNVLERDLDLNILRARVGMVFQKPTPFPMSIYDNIAFGVRLHEKLNKAEMDARVQDVLTRVALWNEVRDRLNAPASGLSGGQQQRLCIARSIATRPEVLLLDEPTSALDPISTARIEELLDELKEEFTIAIVTHNMQQAARCADQVAFFYMGRLIEVDSADRMFTNPKQQQTQDYITGRFG.

Positions 22–263 constitute an ABC transporter domain; that stretch reads LAVRNLNFYY…PKQQQTQDYI (242 aa). 54 to 61 contributes to the ATP binding site; it reads GPSGCGKS.

Belongs to the ABC transporter superfamily. Phosphate importer (TC 3.A.1.7) family. In terms of assembly, the complex is composed of two ATP-binding proteins (PstB), two transmembrane proteins (PstC and PstA) and a solute-binding protein (PstS).

Its subcellular location is the cell inner membrane. The catalysed reaction is phosphate(out) + ATP + H2O = ADP + 2 phosphate(in) + H(+). Part of the ABC transporter complex PstSACB involved in phosphate import. Responsible for energy coupling to the transport system. The polypeptide is Phosphate import ATP-binding protein PstB (Gluconobacter oxydans (strain 621H) (Gluconobacter suboxydans)).